We begin with the raw amino-acid sequence, 152 residues long: Deoxyuridine 5'-triphosphate nucleotidohydrolase (152 aa).

Residues 71–73 (RSG), Asn84, 88–90 (LID), and Met98 contribute to the substrate site.

It belongs to the dUTPase family. The cofactor is Mg(2+).

The enzyme catalyses dUTP + H2O = dUMP + diphosphate + H(+). It participates in pyrimidine metabolism; dUMP biosynthesis; dUMP from dCTP (dUTP route): step 2/2. Its function is as follows. This enzyme is involved in nucleotide metabolism: it produces dUMP, the immediate precursor of thymidine nucleotides and it decreases the intracellular concentration of dUTP so that uracil cannot be incorporated into DNA. The sequence is that of Deoxyuridine 5'-triphosphate nucleotidohydrolase from Erwinia tasmaniensis (strain DSM 17950 / CFBP 7177 / CIP 109463 / NCPPB 4357 / Et1/99).